The following is a 164-amino-acid chain: Phosphopantetheine adenylyltransferase (164 aa).

S9 is a binding site for substrate. Residues S9–F10 and H17 each bind ATP. Substrate is bound by residues K41, V78, and R92. ATP contacts are provided by residues G93–R95, E103, and V128–T134.

The protein belongs to the bacterial CoaD family. Homohexamer. The cofactor is Mg(2+).

Its subcellular location is the cytoplasm. The enzyme catalyses (R)-4'-phosphopantetheine + ATP + H(+) = 3'-dephospho-CoA + diphosphate. Its pathway is cofactor biosynthesis; coenzyme A biosynthesis; CoA from (R)-pantothenate: step 4/5. Its function is as follows. Reversibly transfers an adenylyl group from ATP to 4'-phosphopantetheine, yielding dephospho-CoA (dPCoA) and pyrophosphate. This is Phosphopantetheine adenylyltransferase from Brucella anthropi (strain ATCC 49188 / DSM 6882 / CCUG 24695 / JCM 21032 / LMG 3331 / NBRC 15819 / NCTC 12168 / Alc 37) (Ochrobactrum anthropi).